The chain runs to 314 residues: Carbamate kinase (314 aa).

The protein belongs to the carbamate kinase family. Homodimer.

It is found in the cytoplasm. The enzyme catalyses hydrogencarbonate + NH4(+) + ATP = carbamoyl phosphate + ADP + H2O + H(+). This is Carbamate kinase (cpkA) from Pyrococcus horikoshii (strain ATCC 700860 / DSM 12428 / JCM 9974 / NBRC 100139 / OT-3).